A 116-amino-acid polypeptide reads, in one-letter code: Large ribosomal subunit protein bL19 (116 aa).

This sequence belongs to the bacterial ribosomal protein bL19 family.

This protein is located at the 30S-50S ribosomal subunit interface and may play a role in the structure and function of the aminoacyl-tRNA binding site. This chain is Large ribosomal subunit protein bL19, found in Staphylococcus aureus (strain Mu3 / ATCC 700698).